The primary structure comprises 1388 residues: Peroxisomal ATPase PEX6 (1388 aa).

Disordered stretches follow at residues 1–29 (MTTS…PALS), 169–192 (EGTF…DTPE), 262–287 (RGQS…DDTA), 302–323 (DAAT…SGVD), and 346–365 (TTAS…IGRG). The segment covering 14-23 (RSPRTRRRRQ) has biased composition (basic residues). The span at 169-178 (EGTFFRDRPN) shows a compositional bias: basic and acidic residues. A compositionally biased stretch (acidic residues) spans 310–323 (TVTETEESDLSGVD). Polar residues predominate over residues 346–358 (TTASGVSTMQPGT). Position 1034–1041 (1034–1041 (GPPGTGKT)) interacts with ATP. The tract at residues 1297-1388 (GPPEKDRQQQ…GTASDDEGLY (92 aa)) is disordered. Low complexity predominate over residues 1319–1332 (VSGSSVVSKGKGKA).

Belongs to the AAA ATPase family. As to quaternary structure, interacts with PEX1; forming the PEX1-PEX6 AAA ATPase complex, which is composed of a heterohexamer formed by a trimer of PEX1-PEX6 dimers.

It localises to the cytoplasm. Its subcellular location is the cytosol. The protein resides in the peroxisome membrane. The enzyme catalyses ATP + H2O = ADP + phosphate + H(+). Its function is as follows. Component of the PEX1-PEX6 AAA ATPase complex, a protein dislocase complex that mediates the ATP-dependent extraction of the PEX5 receptor from peroxisomal membranes, an essential step for PEX5 recycling. Specifically recognizes PEX5 monoubiquitinated at 'Cys-6', and pulls it out of the peroxisome lumen through the PEX2-PEX10-PEX12 retrotranslocation channel. Extraction by the PEX1-PEX6 AAA ATPase complex is accompanied by unfolding of the TPR repeats and release of bound cargo from PEX5. In Colletotrichum orbiculare (strain 104-T / ATCC 96160 / CBS 514.97 / LARS 414 / MAFF 240422) (Cucumber anthracnose fungus), this protein is Peroxisomal ATPase PEX6 (PEX6).